Here is a 309-residue protein sequence, read N- to C-terminus: Histidine protein methyltransferase 1 homolog (309 aa).

2 disordered regions span residues 1–37 (MSFK…FDSS) and 79–111 (KPFK…NNKD). Positions 25-37 (EESKLDISEFDSS) are enriched in basic and acidic residues. Low complexity predominate over residues 84–109 (NQDNNNDNNVNSNDKNDNNNNNNNNN). S-adenosyl-L-methionine contacts are provided by residues 132–136 (LWECS), G159, 179–181 (QDY), 209–211 (GDW), and S229.

It belongs to the methyltransferase superfamily. METTL18 family.

Its subcellular location is the cytoplasm. The protein localises to the cytosol. It is found in the nucleus. The protein resides in the nucleolus. It carries out the reaction L-histidyl-[protein] + S-adenosyl-L-methionine = N(tele)-methyl-L-histidyl-[protein] + S-adenosyl-L-homocysteine + H(+). In terms of biological role, protein-L-histidine N-tele-methyltransferase that probably monomethylates RPL3. Through the methylation of RPL3 may regulate the dynamics of pre-rRNA processing, ribosome biogenesis, and translation. The protein is Histidine protein methyltransferase 1 homolog of Dictyostelium discoideum (Social amoeba).